We begin with the raw amino-acid sequence, 394 residues long: G2/mitotic-specific cyclin-B (394 aa).

A disordered region spans residues 360–394 (QSHPSPNSRLDQEEDMASSKFMSDQQATQELKSIR). Residues 379 to 394 (KFMSDQQATQELKSIR) are compositionally biased toward polar residues.

The protein belongs to the cyclin family. Cyclin AB subfamily. Interacts with the CDK1 protein kinase to form a serine/threonine kinase holoenzyme complex also known as maturation promoting factor (MPF). The cyclin subunit imparts substrate specificity to the complex.

Essential for the control of the cell cycle at the G2/M (mitosis) transition. The polypeptide is G2/mitotic-specific cyclin-B (Patiria pectinifera (Starfish)).